The sequence spans 127 residues: Small ribosomal subunit protein uS11 (127 aa).

The protein belongs to the universal ribosomal protein uS11 family. Part of the 30S ribosomal subunit. Interacts with proteins S7 and S18. Binds to IF-3.

Functionally, located on the platform of the 30S subunit, it bridges several disparate RNA helices of the 16S rRNA. Forms part of the Shine-Dalgarno cleft in the 70S ribosome. In Pelodictyon phaeoclathratiforme (strain DSM 5477 / BU-1), this protein is Small ribosomal subunit protein uS11.